The sequence spans 236 residues: Ubiquinone biosynthesis O-methyltransferase (236 aa).

S-adenosyl-L-methionine is bound by residues R39, G59, D80, and M124.

The protein belongs to the methyltransferase superfamily. UbiG/COQ3 family.

It catalyses the reaction a 3-demethylubiquinol + S-adenosyl-L-methionine = a ubiquinol + S-adenosyl-L-homocysteine + H(+). The catalysed reaction is a 3-(all-trans-polyprenyl)benzene-1,2-diol + S-adenosyl-L-methionine = a 2-methoxy-6-(all-trans-polyprenyl)phenol + S-adenosyl-L-homocysteine + H(+). The protein operates within cofactor biosynthesis; ubiquinone biosynthesis. Functionally, O-methyltransferase that catalyzes the 2 O-methylation steps in the ubiquinone biosynthetic pathway. The protein is Ubiquinone biosynthesis O-methyltransferase of Shewanella sp. (strain W3-18-1).